The chain runs to 283 residues: Pantothenate synthetase 2 (283 aa).

34–41 contacts ATP; the sequence is MGALHDGH. The Proton donor role is filled by His41. Gln65 contacts (R)-pantoate. Gln65 serves as a coordination point for beta-alanine. 152 to 155 contacts ATP; the sequence is GEKD. Gln158 is a (R)-pantoate binding site. Residues Val181 and 189 to 192 contribute to the ATP site; that span reads MSSR.

The protein belongs to the pantothenate synthetase family. As to quaternary structure, homodimer.

It localises to the cytoplasm. It carries out the reaction (R)-pantoate + beta-alanine + ATP = (R)-pantothenate + AMP + diphosphate + H(+). The protein operates within cofactor biosynthesis; (R)-pantothenate biosynthesis; (R)-pantothenate from (R)-pantoate and beta-alanine: step 1/1. In terms of biological role, catalyzes the condensation of pantoate with beta-alanine in an ATP-dependent reaction via a pantoyl-adenylate intermediate. The polypeptide is Pantothenate synthetase 2 (Bradyrhizobium diazoefficiens (strain JCM 10833 / BCRC 13528 / IAM 13628 / NBRC 14792 / USDA 110)).